The sequence spans 422 residues: Solanesyl diphosphate synthase 3, chloroplastic/mitochondrial (422 aa).

A chloroplast and mitochondrion-targeting transit peptide spans 1-32 (MLFTRSVARISSKFLRNRSFYGSSQSLASHRF). Isopentenyl diphosphate is bound by residues Lys125, Arg128, and His174. Positions 181 and 185 each coordinate Mg(2+). An an all-trans-polyprenyl diphosphate-binding site is contributed by Arg190. Arg191 contributes to the isopentenyl diphosphate binding site. The an all-trans-polyprenyl diphosphate site is built by Lys267, Thr268, Gln305, and Lys322.

It belongs to the FPP/GGPP synthase family. In terms of assembly, homodimer. Mg(2+) serves as cofactor. As to expression, ubiquitous. Highest expression in seeds and shoot apical meristem.

Its subcellular location is the plastid. The protein resides in the chloroplast. The protein localises to the mitochondrion. The enzyme catalyses 5 isopentenyl diphosphate + (2E,6E,10E)-geranylgeranyl diphosphate = all-trans-nonaprenyl diphosphate + 5 diphosphate. Its function is as follows. May be involved in the supply of solanesyl diphosphate for ubiquinone-9 (UQ-9) biosynthesis in mitochondria. Synthesizes C25 to C45 medium / long-chain products depending on the type of substrate available. Can use geranyl diphosphate, farnesyl diphosphate or geranylgeranyl diphosphate as substrates, but not dimethylallyl diphosphate. The polypeptide is Solanesyl diphosphate synthase 3, chloroplastic/mitochondrial (Arabidopsis thaliana (Mouse-ear cress)).